We begin with the raw amino-acid sequence, 677 residues long: L-type lectin-domain containing receptor kinase IV.2 (677 aa).

Positions 1-22 are cleaved as a signal peptide; sequence MFVKLKLIFFFFLLCQIMISSS. At 23–291 the chain is on the extracellular side; that stretch reads QNLNFTYNGF…EPRRISEFYK (269 aa). The legume-lectin like stretch occupies residues 24–262; the sequence is NLNFTYNGFH…EHFLVGWSFR (239 aa). Asparagine 26, asparagine 57, asparagine 81, asparagine 128, asparagine 134, asparagine 171, asparagine 186, and asparagine 203 each carry an N-linked (GlcNAc...) asparagine glycan. The helical transmembrane segment at 292–312 threads the bilayer; sequence IGMPLISLSLIFSIIFLAFYI. The Cytoplasmic segment spans residues 313 to 677; it reads VRRKKKYEEE…IADSLLSGGR (365 aa). Residues 347–625 form the Protein kinase domain; it reads FKEKDLLGSG…LQYLRGDMAL (279 aa). ATP-binding positions include 353 to 361 and lysine 376; that span reads LGSGGFGRV. Residue aspartate 472 is the Proton acceptor of the active site.

The protein in the C-terminal section; belongs to the protein kinase superfamily. Ser/Thr protein kinase family. It in the N-terminal section; belongs to the leguminous lectin family.

The protein localises to the cell membrane. The enzyme catalyses L-seryl-[protein] + ATP = O-phospho-L-seryl-[protein] + ADP + H(+). It carries out the reaction L-threonyl-[protein] + ATP = O-phospho-L-threonyl-[protein] + ADP + H(+). Functionally, required during pollen development. Involved in resistance response to the pathogenic bacteria Pseudomonas syringae. The protein is L-type lectin-domain containing receptor kinase IV.2 of Arabidopsis thaliana (Mouse-ear cress).